The primary structure comprises 383 residues: 1-deoxy-D-xylulose 5-phosphate reductoisomerase (383 aa).

The NADPH site is built by Thr-10, Gly-11, Ser-12, Ile-13, Gly-36, Arg-37, Asn-38, and Asn-122. Lys-123 contributes to the 1-deoxy-D-xylulose 5-phosphate binding site. Residue Glu-124 coordinates NADPH. A Mn(2+)-binding site is contributed by Asp-148. 1-deoxy-D-xylulose 5-phosphate is bound by residues Ser-149, Glu-150, Ser-174, and His-197. Glu-150 lines the Mn(2+) pocket. Residue Gly-203 participates in NADPH binding. 1-deoxy-D-xylulose 5-phosphate is bound by residues Ser-210, Asn-215, Lys-216, and Glu-219. Glu-219 lines the Mn(2+) pocket.

Belongs to the DXR family. Mg(2+) is required as a cofactor. It depends on Mn(2+) as a cofactor.

It catalyses the reaction 2-C-methyl-D-erythritol 4-phosphate + NADP(+) = 1-deoxy-D-xylulose 5-phosphate + NADPH + H(+). Its pathway is isoprenoid biosynthesis; isopentenyl diphosphate biosynthesis via DXP pathway; isopentenyl diphosphate from 1-deoxy-D-xylulose 5-phosphate: step 1/6. In terms of biological role, catalyzes the NADPH-dependent rearrangement and reduction of 1-deoxy-D-xylulose-5-phosphate (DXP) to 2-C-methyl-D-erythritol 4-phosphate (MEP). This chain is 1-deoxy-D-xylulose 5-phosphate reductoisomerase, found in Bacillus subtilis (strain 168).